The primary structure comprises 62 residues: uncharacterized protein (62 aa).

A helical transmembrane segment spans residues Ile17–Ile37.

The protein resides in the membrane. This is an uncharacterized protein from Helicobacter pylori (strain J99 / ATCC 700824) (Campylobacter pylori J99).